The sequence spans 502 residues: Probable cytosol aminopeptidase (502 aa).

Residues Lys-267 and Asp-272 each contribute to the Mn(2+) site. Lys-279 is a catalytic residue. Residues Asp-290, Asp-349, and Glu-351 each contribute to the Mn(2+) site. Residue Arg-353 is part of the active site.

It belongs to the peptidase M17 family. Mn(2+) serves as cofactor.

It is found in the cytoplasm. The enzyme catalyses Release of an N-terminal amino acid, Xaa-|-Yaa-, in which Xaa is preferably Leu, but may be other amino acids including Pro although not Arg or Lys, and Yaa may be Pro. Amino acid amides and methyl esters are also readily hydrolyzed, but rates on arylamides are exceedingly low.. It carries out the reaction Release of an N-terminal amino acid, preferentially leucine, but not glutamic or aspartic acids.. Its function is as follows. Presumably involved in the processing and regular turnover of intracellular proteins. Catalyzes the removal of unsubstituted N-terminal amino acids from various peptides. This chain is Probable cytosol aminopeptidase, found in Aeromonas salmonicida (strain A449).